Reading from the N-terminus, the 486-residue chain is Betaine aldehyde dehydrogenase (486 aa).

T23 and D90 together coordinate K(+). An NAD(+)-binding site is contributed by G147–W149. Catalysis depends on K159, which acts as the Charge relay system. Residues K173–E176 and E226–T229 each bind NAD(+). L241 lines the K(+) pocket. Residue E247 is the Proton acceptor of the active site. Residues G249, C281, and E382 each coordinate NAD(+). C281 acts as the Nucleophile in catalysis. C281 carries the post-translational modification Cysteine sulfenic acid (-SOH). K(+) contacts are provided by K452 and G455. E459 (charge relay system) is an active-site residue.

The protein belongs to the aldehyde dehydrogenase family. In terms of assembly, dimer of dimers. It depends on K(+) as a cofactor.

The enzyme catalyses betaine aldehyde + NAD(+) + H2O = glycine betaine + NADH + 2 H(+). The protein operates within amine and polyamine biosynthesis; betaine biosynthesis via choline pathway; betaine from betaine aldehyde: step 1/1. Involved in the biosynthesis of the osmoprotectant glycine betaine. Catalyzes the irreversible oxidation of betaine aldehyde to the corresponding acid. This is Betaine aldehyde dehydrogenase from Vibrio campbellii (strain ATCC BAA-1116).